We begin with the raw amino-acid sequence, 139 residues long: Small ribosomal subunit protein uS11 (139 aa).

The span at 1–13 (MAKQAAKGSAAAT) shows a compositional bias: low complexity. The disordered stretch occupies residues 1 to 30 (MAKQAAKGSAAATKRQRGKRREKKNVPRGQ). Basic residues predominate over residues 14–23 (KRQRGKRREK).

It belongs to the universal ribosomal protein uS11 family. As to quaternary structure, part of the 30S ribosomal subunit. Interacts with proteins S7 and S18. Binds to IF-3.

Its function is as follows. Located on the platform of the 30S subunit, it bridges several disparate RNA helices of the 16S rRNA. Forms part of the Shine-Dalgarno cleft in the 70S ribosome. The polypeptide is Small ribosomal subunit protein uS11 (Roseiflexus sp. (strain RS-1)).